Here is a 126-residue protein sequence, read N- to C-terminus: Probable DNA-directed RNA polymerase II subunit RPB11 (126 aa).

This sequence belongs to the archaeal Rpo11/eukaryotic RPB11/RPC19 RNA polymerase subunit family. Component of the RNA polymerase II (Pol II) complex consisting of 12 subunits.

The protein resides in the nucleus. Functionally, DNA-dependent RNA polymerase catalyzes the transcription of DNA into RNA using the four ribonucleoside triphosphates as substrates. Component of RNA polymerase II which synthesizes mRNA precursors and many functional non-coding RNAs. Pol II is the central component of the basal RNA polymerase II transcription machinery. It is composed of mobile elements that move relative to each other. RPB11 is part of the core element with the central large cleft. The polypeptide is Probable DNA-directed RNA polymerase II subunit RPB11 (Plasmodium chabaudi chabaudi).